A 286-amino-acid polypeptide reads, in one-letter code: Protease HtpX homolog (286 aa).

The next 2 helical transmembrane spans lie at 7 to 27 and 29 to 49; these read TFML…MIGG and SGMM…YWFS. Position 131 (His-131) interacts with Zn(2+). Glu-132 is a catalytic residue. His-135 serves as a coordination point for Zn(2+). The next 2 membrane-spanning stretches (helical) occupy residues 146–166 and 177–197; these read LSAT…FFGG and IAGI…QMAI. Glu-202 is a Zn(2+) binding site.

This sequence belongs to the peptidase M48B family. It depends on Zn(2+) as a cofactor.

The protein resides in the cell inner membrane. The protein is Protease HtpX homolog of Ralstonia nicotianae (strain ATCC BAA-1114 / GMI1000) (Ralstonia solanacearum).